We begin with the raw amino-acid sequence, 354 residues long: Hydrophobic dipeptide epimerase (354 aa).

Substrate is bound by residues Thr134, Lys159, and 159 to 161 (KIK). Asp189 serves as a coordination point for Mg(2+). Residue Asn191 coordinates substrate. Positions 215 and 240 each coordinate Mg(2+). Substrate is bound by residues Lys264, 292 to 295 (CMAE), and 318 to 320 (DLD).

It belongs to the mandelate racemase/muconate lactonizing enzyme family. Mg(2+) serves as cofactor.

Functionally, catalyzes the epimerization of L-Ile-L-Tyr to L-Ile-D-Tyr (in vitro). Catalyzes the epimerization of dipeptides, with a preference for substrates with a hydrophobic or basic amino acid in the first position, followed by an aromatic residue in the second position. Has epimerase activity with L-Ile-L-Tyr, L-Val-L-Tyr and L-Arg-L-Tyr (in vitro). This is Hydrophobic dipeptide epimerase from Enterococcus faecalis (strain ATCC 700802 / V583).